A 319-amino-acid chain; its full sequence is Ribosomal RNA small subunit methyltransferase H (319 aa).

S-adenosyl-L-methionine contacts are provided by residues 39–41 (GGH), Asp59, Phe83, Asp104, and Gln111.

The protein belongs to the methyltransferase superfamily. RsmH family.

The protein resides in the cytoplasm. It carries out the reaction cytidine(1402) in 16S rRNA + S-adenosyl-L-methionine = N(4)-methylcytidine(1402) in 16S rRNA + S-adenosyl-L-homocysteine + H(+). Its function is as follows. Specifically methylates the N4 position of cytidine in position 1402 (C1402) of 16S rRNA. This chain is Ribosomal RNA small subunit methyltransferase H, found in Ralstonia pickettii (strain 12D).